Consider the following 801-residue polypeptide: N,N'-diacetylchitobiose phosphorylase (801 aa).

N-acetyl-alpha-D-glucosamine 1-phosphate contacts are provided by Arg333, Arg343, Arg349, Asp350, Trp490, and Asp492. The Proton donor role is filled by Asp492. N-acetyl-D-glucosamine is bound by residues Asp492, Lys636, and Glu637. N-acetyl-alpha-D-glucosamine 1-phosphate is bound by residues Glu637, His644, Gln690, Thr709, and Gly710.

It belongs to the glycosyl hydrolase 94 family. Homodimer.

The catalysed reaction is N,N'-diacetylchitobiose + phosphate = N-acetyl-alpha-D-glucosamine 1-phosphate + N-acetyl-D-glucosamine. Its function is as follows. Catalyzes the reversible phosphorolysis of chitobiose (N,N'-diacetylchitobiose or (GlcNAc)(2)) into N-acetyl-alpha-D-glucosamine 1-phosphate (GlcNAc-1-P) and N-acetyl-D-glucosamine (GlcNAc) with inversion of the anomeric configuration. In the synthetic reaction, is also active on glucose-1-phosphate with 10% activity as compared with that on GlcNAc-1-P. GlcNAc is the best acceptor substrate, but the enzyme can use aryl-beta-glycosides of GlcNAc as the acceptor substrate with 10-20% activities of GlcNAc. Shows no phosphorolytic activity on cellobiose. This Vibrio proteolyticus (Aeromonas proteolytica) protein is N,N'-diacetylchitobiose phosphorylase.